The sequence spans 359 residues: uncharacterized protein (359 aa).

Residues 1–15 (MSIVLAIDTATAAVT) form the signal peptide. Residues 212–359 (IVIGTLTPAD…DAYLMRREAQ (148 aa)) enclose the N-acetyltransferase domain.

This is an uncharacterized protein from Mycobacterium leprae (strain TN).